Here is a 219-residue protein sequence, read N- to C-terminus: MTTGGHGTDGVERRGLMFVLSSPSGAGKTTLSRLLIERMPGLRMSVSATTRPMRPGEVDGRDYLFVDKPRFEAMVRDDELLEWATVFDNRYGTPRAPVEAALSAGQDVLFDIDWQGTQQLREKARADVVSVFILPPSAGDLEKRLHSRAQDSDEVIRKRMSRASHEMSHWAEYDYIVINHDVDEAFAEVQSILKAERLKRERRIGLVGFVRGLQGQLQG.

A Guanylate kinase-like domain is found at 15-194 (GLMFVLSSPS…AFAEVQSILK (180 aa)). Residue 22 to 29 (SPSGAGKT) coordinates ATP.

This sequence belongs to the guanylate kinase family.

Its subcellular location is the cytoplasm. It carries out the reaction GMP + ATP = GDP + ADP. Functionally, essential for recycling GMP and indirectly, cGMP. This Bradyrhizobium diazoefficiens (strain JCM 10833 / BCRC 13528 / IAM 13628 / NBRC 14792 / USDA 110) protein is Guanylate kinase.